Reading from the N-terminus, the 130-residue chain is Small ribosomal subunit protein uS8 (130 aa).

Belongs to the universal ribosomal protein uS8 family. As to quaternary structure, part of the 30S ribosomal subunit. Contacts proteins S5 and S12.

Its function is as follows. One of the primary rRNA binding proteins, it binds directly to 16S rRNA central domain where it helps coordinate assembly of the platform of the 30S subunit. The polypeptide is Small ribosomal subunit protein uS8 (Pectobacterium carotovorum subsp. carotovorum (strain PC1)).